The following is a 149-amino-acid chain: D-aminoacyl-tRNA deacylase (149 aa).

Positions 137 to 138 (GP) match the Gly-cisPro motif, important for rejection of L-amino acids motif.

The protein belongs to the DTD family. In terms of assembly, homodimer.

It is found in the cytoplasm. It catalyses the reaction glycyl-tRNA(Ala) + H2O = tRNA(Ala) + glycine + H(+). The enzyme catalyses a D-aminoacyl-tRNA + H2O = a tRNA + a D-alpha-amino acid + H(+). In terms of biological role, an aminoacyl-tRNA editing enzyme that deacylates mischarged D-aminoacyl-tRNAs. Also deacylates mischarged glycyl-tRNA(Ala), protecting cells against glycine mischarging by AlaRS. Acts via tRNA-based rather than protein-based catalysis; rejects L-amino acids rather than detecting D-amino acids in the active site. By recycling D-aminoacyl-tRNA to D-amino acids and free tRNA molecules, this enzyme counteracts the toxicity associated with the formation of D-aminoacyl-tRNA entities in vivo and helps enforce protein L-homochirality. The protein is D-aminoacyl-tRNA deacylase of Clostridium beijerinckii (strain ATCC 51743 / NCIMB 8052) (Clostridium acetobutylicum).